Consider the following 158-residue polypeptide: NAD(P)H-quinone oxidoreductase subunit J, chloroplastic (158 aa).

This sequence belongs to the complex I 30 kDa subunit family. NDH is composed of at least 16 different subunits, 5 of which are encoded in the nucleus.

The protein localises to the plastid. The protein resides in the chloroplast thylakoid membrane. The enzyme catalyses a plastoquinone + NADH + (n+1) H(+)(in) = a plastoquinol + NAD(+) + n H(+)(out). It catalyses the reaction a plastoquinone + NADPH + (n+1) H(+)(in) = a plastoquinol + NADP(+) + n H(+)(out). Functionally, NDH shuttles electrons from NAD(P)H:plastoquinone, via FMN and iron-sulfur (Fe-S) centers, to quinones in the photosynthetic chain and possibly in a chloroplast respiratory chain. The immediate electron acceptor for the enzyme in this species is believed to be plastoquinone. Couples the redox reaction to proton translocation, and thus conserves the redox energy in a proton gradient. This chain is NAD(P)H-quinone oxidoreductase subunit J, chloroplastic, found in Cucumis sativus (Cucumber).